The chain runs to 216 residues: FMN-dependent NADH:quinone oxidoreductase (216 aa).

Residues S10 and 15–17 each bind FMN; that span reads SIS.

It belongs to the azoreductase type 1 family. Homodimer. FMN is required as a cofactor.

The enzyme catalyses 2 a quinone + NADH + H(+) = 2 a 1,4-benzosemiquinone + NAD(+). It catalyses the reaction N,N-dimethyl-1,4-phenylenediamine + anthranilate + 2 NAD(+) = 2-(4-dimethylaminophenyl)diazenylbenzoate + 2 NADH + 2 H(+). Quinone reductase that provides resistance to thiol-specific stress caused by electrophilic quinones. Functionally, also exhibits azoreductase activity. Catalyzes the reductive cleavage of the azo bond in aromatic azo compounds to the corresponding amines. This chain is FMN-dependent NADH:quinone oxidoreductase, found in Nocardia farcinica (strain IFM 10152).